Reading from the N-terminus, the 102-residue chain is PqqA binding protein (102 aa).

The protein belongs to the PqqD family. In terms of assembly, monomer. Interacts with PqqE.

Its pathway is cofactor biosynthesis; pyrroloquinoline quinone biosynthesis. In terms of biological role, functions as a PqqA binding protein and presents PqqA to PqqE, in the pyrroloquinoline quinone (PQQ) biosynthetic pathway. This chain is PqqA binding protein, found in Rhodopseudomonas palustris (strain BisB5).